The sequence spans 658 residues: DNA mismatch repair protein MutL (658 aa).

2 disordered regions span residues 114-137 (RQNDSSHATQVKAEDGKLSSPTAA) and 437-456 (RFGNMPSETPAPQTDTPLSD). Over residues 442–456 (PSETPAPQTDTPLSD) the composition is skewed to polar residues.

This sequence belongs to the DNA mismatch repair MutL/HexB family.

This protein is involved in the repair of mismatches in DNA. It is required for dam-dependent methyl-directed DNA mismatch repair. May act as a 'molecular matchmaker', a protein that promotes the formation of a stable complex between two or more DNA-binding proteins in an ATP-dependent manner without itself being part of a final effector complex. This Neisseria meningitidis serogroup B (strain ATCC BAA-335 / MC58) protein is DNA mismatch repair protein MutL.